Here is a 289-residue protein sequence, read N- to C-terminus: MLYFLPTPIGNLADITLRTLEVLERCEVFLCEDTRVSKRLLHLLAKNPIISHSFPNIAAKKREFIAFHSHNDQEFLNQIEPSFFDKEIAVMSDAGMPSLSDPGMSLVAYALKHNLQYDVLPGANALTTAFCASGFLEGRFFYAGFLPHKSKERRLRIIKILNALAYLEEKTPVVFYESPHRLLETLRDLNDLAQGMHLFAAKELTKLHQQYYLGEISQIMTQLQKSNIQGEWVLVLLNEKKIEPSMGLSALLELDLPPKIKAKMEAAMTQKNAKELYFQRLLEEKKQCD.

This sequence belongs to the methyltransferase superfamily. RsmI family.

The protein resides in the cytoplasm. It catalyses the reaction cytidine(1402) in 16S rRNA + S-adenosyl-L-methionine = 2'-O-methylcytidine(1402) in 16S rRNA + S-adenosyl-L-homocysteine + H(+). Its function is as follows. Catalyzes the 2'-O-methylation of the ribose of cytidine 1402 (C1402) in 16S rRNA. In Helicobacter pylori (strain J99 / ATCC 700824) (Campylobacter pylori J99), this protein is Ribosomal RNA small subunit methyltransferase I.